The primary structure comprises 274 residues: Secreted RxLR effector protein 40 (274 aa).

The signal sequence occupies residues 1–21 (MRLYTQVVAASLVATLAIVDS). Residues 35-53 (RFLRQDNATVARVSEDGER) carry the RxLR-dEER motif. N-linked (GlcNAc...) asparagine glycosylation is found at N41, N74, and N258.

It belongs to the RxLR effector family.

The protein resides in the secreted. It is found in the host nucleus. The protein localises to the host cytoplasm. Its function is as follows. Secreted effector that completely suppresses the host cell death induced by cell death-inducing proteins. This Plasmopara viticola (Downy mildew of grapevine) protein is Secreted RxLR effector protein 40.